A 658-amino-acid chain; its full sequence is Biosynthetic arginine decarboxylase (658 aa).

Residue Lys127 is modified to N6-(pyridoxal phosphate)lysine. A substrate-binding site is contributed by 307-317; sequence FDVGGGLGVDY.

This sequence belongs to the Orn/Lys/Arg decarboxylase class-II family. SpeA subfamily. Mg(2+) is required as a cofactor. Pyridoxal 5'-phosphate serves as cofactor.

The enzyme catalyses L-arginine + H(+) = agmatine + CO2. It functions in the pathway amine and polyamine biosynthesis; agmatine biosynthesis; agmatine from L-arginine: step 1/1. Catalyzes the biosynthesis of agmatine from arginine. This is Biosynthetic arginine decarboxylase from Salmonella typhi.